The primary structure comprises 551 residues: Glucose-6-phosphate isomerase (551 aa).

Catalysis depends on Glu349, which acts as the Proton donor. Catalysis depends on residues His378 and Lys480.

The protein belongs to the GPI family.

The protein resides in the cytoplasm. It carries out the reaction alpha-D-glucose 6-phosphate = beta-D-fructose 6-phosphate. The protein operates within carbohydrate biosynthesis; gluconeogenesis. Its pathway is carbohydrate degradation; glycolysis; D-glyceraldehyde 3-phosphate and glycerone phosphate from D-glucose: step 2/4. Its function is as follows. Catalyzes the reversible isomerization of glucose-6-phosphate to fructose-6-phosphate. The polypeptide is Glucose-6-phosphate isomerase (Prochlorococcus marinus (strain MIT 9313)).